We begin with the raw amino-acid sequence, 224 residues long: 25 kDa integral membrane protein (224 aa).

Topologically, residues 1 to 12 are cytoplasmic; the sequence is MKLSFTKVSLTN. The chain crosses the membrane as a helical span at residues 13–33; that stretch reads ILILFNCLFIIFSMIVLTFGV. Topologically, residues 34–52 are extracellular; that stretch reads IPQIYLLKFANILHGVRPS. Residues 53–73 form a helical membrane-spanning segment; it reads IFPIVCFTGSFVIIVACVGII. Residues 74–80 are Cytoplasmic-facing; the sequence is GLMKGGK. Residues 81-101 traverse the membrane as a helical segment; sequence CLLTMHIIALIIATIIDISTA. At 102–189 the chain is on the extracellular side; that stretch reads TLSAIKQNEF…LNKYVRYYID (88 aa). An N-linked (GlcNAc...) asparagine glycan is attached at Asn-120. Residues 190–210 traverse the membrane as a helical segment; that stretch reads ILIYLCFIFGFIKLIYSLFTF. Residues 211–224 are Cytoplasmic-facing; the sequence is TQRQRIFSEKTPVA.

The protein belongs to the tetraspanin (TM4SF) family.

It localises to the membrane. The chain is 25 kDa integral membrane protein from Schistosoma japonicum (Blood fluke).